The chain runs to 220 residues: Small ribosomal subunit protein uS3 (220 aa).

Residues isoleucine 43–lysine 111 form the KH type-2 domain.

It belongs to the universal ribosomal protein uS3 family. As to quaternary structure, part of the 30S ribosomal subunit. Forms a tight complex with proteins S10 and S14.

Binds the lower part of the 30S subunit head. Binds mRNA in the 70S ribosome, positioning it for translation. The polypeptide is Small ribosomal subunit protein uS3 (Tropheryma whipplei (strain TW08/27) (Whipple's bacillus)).